The chain runs to 123 residues: Small ribosomal subunit protein uS12 (123 aa).

A 3-methylthioaspartic acid modification is found at aspartate 89.

This sequence belongs to the universal ribosomal protein uS12 family. In terms of assembly, part of the 30S ribosomal subunit. Contacts proteins S8 and S17. May interact with IF1 in the 30S initiation complex.

In terms of biological role, with S4 and S5 plays an important role in translational accuracy. Its function is as follows. Interacts with and stabilizes bases of the 16S rRNA that are involved in tRNA selection in the A site and with the mRNA backbone. Located at the interface of the 30S and 50S subunits, it traverses the body of the 30S subunit contacting proteins on the other side and probably holding the rRNA structure together. The combined cluster of proteins S8, S12 and S17 appears to hold together the shoulder and platform of the 30S subunit. The protein is Small ribosomal subunit protein uS12 of Sinorhizobium medicae (strain WSM419) (Ensifer medicae).